The chain runs to 73 residues: Long neurotoxin 3 (73 aa).

5 disulfide bridges follow: C3–C21, C14–C42, C27–C31, C46–C57, and C58–C63.

This sequence belongs to the three-finger toxin family. Long-chain subfamily. Type II alpha-neurotoxin sub-subfamily. In terms of tissue distribution, expressed by the venom gland.

The protein resides in the secreted. Binds with high affinity to muscular (alpha-1/CHRNA1) and neuronal (alpha-7/CHRNA7) nicotinic acetylcholine receptor (nAChR) and inhibits acetylcholine from binding to the receptor, thereby impairing neuromuscular and neuronal transmission. The sequence is that of Long neurotoxin 3 from Ophiophagus hannah (King cobra).